Reading from the N-terminus, the 793-residue chain is E3 UFM1-protein ligase 1 (793 aa).

The residue at position 2 (Ala-2) is an N-acetylalanine. The mediates interaction with DDRGK1 stretch occupies residues 2–200 (ADAWEEIRRL…RGLFSAITRP (199 aa)). The interval 2–212 (ADAWEEIRRL…VNSLVSKYGF (211 aa)) is required for E3 UFM1-protein ligase activity. An involved in CDK5RAP3-binding region spans residues 121–250 (DRLSEEVNDK…KAVFVPDIYS (130 aa)). The interval 200–400 (PTAVNSLVSK…NPVHLITEED (201 aa)) is mediates interaction with TRIP4. The tract at residues 410–473 (VNTNKKDKKD…SSHAGKKKPD (64 aa)) is disordered. Arg-433 carries the omega-N-methylarginine modification. 2 positions are modified to phosphoserine: Ser-458 and Ser-462. Residues 490–683 (IPDAPEEFIS…QLKVTEDPAL (194 aa)) are mediates interaction with CDK5RAP3. Thr-535 carries the phosphothreonine modification. The tract at residues 742–769 (NKKSGQGEDPSSDDLDKEQHDVTNTTRK) is disordered. 2 positions are modified to phosphoserine: Ser-752 and Ser-753. A compositionally biased stretch (basic and acidic residues) spans 758 to 769 (KEQHDVTNTTRK).

The protein belongs to the UFL1 family. Catalytic component of the UFM1 ribosome E3 ligase (UREL) complex, composed of UFL1, DDRGK1 and CDK5RAP3. Interacts with E2-like enzyme UFC1. Interacts with RELA. Interacts with NBN; promoting recruitment to double-strand breaks following DNA damage. Interacts (when phosphorylated) with YWHAG/14-3-3-gamma; sequestering UFL1 and preventing its association with PDCD1/PD-1 substrate. Ubiquitinated, leading to its degradation by the proteasome. Interaction with CDK5RAP3 protects both proteins against ubiquitination and degradation via the proteasome. In terms of processing, phosphorylated at Ser-462 by ATM, enhancing protein ligase activity and promoting ATM activation in a positive feedback loop. Phosphorylation at Thr-535 by AMPK promotes its interaction with YWHAG/14-3-3-gamma, thereby preventing UFL1 association with PDCD1/PD-1 substrate. As to expression, ubiquitously expressed with expression detected in brain, skeletal muscle, lung, heart, gall bladder, liver, small intestine, pancreas, spleen and kidney (at protein level). At 8 weeks after birth, high expression in the Purkinje cell layer of the cerebellum.

Its subcellular location is the endoplasmic reticulum membrane. The protein localises to the cytoplasm. It is found in the cytosol. The protein resides in the nucleus. It localises to the chromosome. Its function is as follows. E3 protein ligase that mediates ufmylation, the covalent attachment of the ubiquitin-like modifier UFM1 to lysine residues on target proteins, and which plays a key role in various processes, such as ribosome recycling, response to DNA damage, interferon response or reticulophagy (also called ER-phagy). Catalyzes ufmylation of many protein, such as CD274/PD-L1, CDK5RAP3, CYB5R3, DDRGK1, EIF6, histone H4, MRE11, P4HB, PDCD1/PD-1, TRIP4, RPN1, RPS20/uS10, RPL10/uL16, RPL26/uL24, SYVN1/HRD1 and TP53/p53. As part of the UREL complex, plays a key role in ribosome recycling by catalyzing mono-ufmylation of RPL26/uL24 subunit of the 60S ribosome. Ufmylation of RPL26/uL24 occurs on free 60S ribosomes following ribosome dissociation: it weakens the junction between post-termination 60S subunits and SEC61 translocons, promoting release and recycling of the large ribosomal subunit from the endoplasmic reticulum membrane. Ufmylation of RPL26/uL24 and subsequent 60S ribosome recycling either take place after normal termination of translation or after ribosome stalling during cotranslational translocation at the endoplasmic reticulum. Involved in reticulophagy in response to endoplasmic reticulum stress by mediating ufmylation of proteins such as CYB5R3 and RPN1, thereby promoting lysosomal degradation of ufmylated proteins. Ufmylation in response to endoplasmic reticulum stress is essential for processes such as hematopoiesis, blood vessel morphogenesis or inflammatory response. Mediates ufmylation of DDRGK1 and CDK5RAP3; the role of these modifications is however unclear: as both DDRGK1 and CDK5RAP3 act as substrate adapters for ufmylation, it is uncertain whether ufmylation of these proteins is, a collateral effect or is required for ufmylation. Acts as a negative regulator of T-cell activation by mediating ufmylation and stabilization of PDCD1/PD-1. Also involved in the response to DNA damage: recruited to double-strand break sites following DNA damage and mediates monoufmylation of histone H4 and ufmylation of MRE11. Mediates ufmylation of TP53/p53, promoting its stability. Catalyzes ufmylation of TRIP4, thereby playing a role in nuclear receptor-mediated transcription. Required for hematopoietic stem cell function and hematopoiesis. The chain is E3 UFM1-protein ligase 1 from Rattus norvegicus (Rat).